The following is a 409-amino-acid chain: 2,3-bisphosphoglycerate-independent phosphoglycerate mutase (409 aa).

The interval 160–179 is disordered; it reads ITDADPKHEGNKPKTVKPLD.

The protein belongs to the BPG-independent phosphoglycerate mutase family. A-PGAM subfamily.

The enzyme catalyses (2R)-2-phosphoglycerate = (2R)-3-phosphoglycerate. It participates in carbohydrate degradation; glycolysis; pyruvate from D-glyceraldehyde 3-phosphate: step 3/5. Its function is as follows. Catalyzes the interconversion of 2-phosphoglycerate and 3-phosphoglycerate. In Methanosphaera stadtmanae (strain ATCC 43021 / DSM 3091 / JCM 11832 / MCB-3), this protein is 2,3-bisphosphoglycerate-independent phosphoglycerate mutase.